Reading from the N-terminus, the 123-residue chain is Galanin peptides (123 aa).

The signal sequence occupies residues 1 to 19 (MPRGCALLLASLLLASALS). A propeptide spanning residues 20–30 (ATLGLGSPVKE) is cleaved from the precursor. Position 61 is an alanine amide (Ala-61). 2 positions are modified to phosphoserine: Ser-116 and Ser-117.

The protein belongs to the galanin family.

The protein resides in the secreted. Endocrine hormone of the central and peripheral nervous systems that binds and activates the G protein-coupled receptors GALR1, GALR2, and GALR3. This small neuropeptide may regulate diverse physiologic functions including contraction of smooth muscle of the gastrointestinal and genitourinary tract, growth hormone and insulin release and adrenal secretion. The protein is Galanin peptides (GAL) of Sus scrofa (Pig).